The sequence spans 500 residues: L-arabinose isomerase (500 aa).

Glu-306, Glu-333, His-349, and His-448 together coordinate Mn(2+).

The protein belongs to the arabinose isomerase family. Requires Mn(2+) as cofactor.

The catalysed reaction is beta-L-arabinopyranose = L-ribulose. It participates in carbohydrate degradation; L-arabinose degradation via L-ribulose; D-xylulose 5-phosphate from L-arabinose (bacterial route): step 1/3. Functionally, catalyzes the conversion of L-arabinose to L-ribulose. The sequence is that of L-arabinose isomerase from Shewanella sp. (strain ANA-3).